The sequence spans 289 residues: 33 kDa chaperonin (289 aa).

Intrachain disulfides connect Cys-235/Cys-237 and Cys-268/Cys-271.

It belongs to the HSP33 family. In terms of processing, under oxidizing conditions two disulfide bonds are formed involving the reactive cysteines. Under reducing conditions zinc is bound to the reactive cysteines and the protein is inactive.

The protein localises to the cytoplasm. In terms of biological role, redox regulated molecular chaperone. Protects both thermally unfolding and oxidatively damaged proteins from irreversible aggregation. Plays an important role in the bacterial defense system toward oxidative stress. The polypeptide is 33 kDa chaperonin (Bacillus licheniformis (strain ATCC 14580 / DSM 13 / JCM 2505 / CCUG 7422 / NBRC 12200 / NCIMB 9375 / NCTC 10341 / NRRL NRS-1264 / Gibson 46)).